The primary structure comprises 1087 residues: MADPVQSLAQLEILCKQLYETTDTSTRLQAEKALVEFTNSSECLSKCQLLLERGSSSYSQLLAATCLTKLVSRSTNPLPLEQRIDIRNYVLTYLATRPKLASFVTQALIQLYARITKLGWFDSQKDEYVFRSVIGDVTRFLQDSVEYCVIGVSILSQLTNEINQADATHPLTKHRKIASSFRDSALFEIFTLSCNLLKQASGKSLLLSDGSQHDLLMQLLKLTHNCLNFDFIGTSTDESSDDLCTVQIPTSWRSAFLDSSTLQLFFDLYHSIPPNFSPLVLSCLVQIASVRRSLFNNAERAKFLSHLVDGVKRILENPQSLSDPNNYHEFCRLLARLKSNYQLGELVKVENYPEVIRLIANFTVTSLQHWEFAPNSVHYLLSLWQRLAASVPYVKATEPHLLETYTPEVTKAYVTSRLESVHIILRDGLEDPLEDAGLVQQQLDQLSTIGRCEYDKTCALLVQLFDQSAQTYQELLQSGSAPSMELAVQEGRLTWLVYIIGAVIGGRVSFASTDEQDAMDGELVCRVLQLMNLTDSRLAQAGNEKLELSMLSLFEQFRKIYIGDQVQKSSKLYRRLSDVLGLNDETMVLSIFIGKIITNLKYWGRCEPITSKTLQLLNDLSIGYSSVRKLVKLSAVQFMLNNHTSEHFSFLGINSQSNLSDMRCRTTFYTALGRLLMVDLGEDEEQFSQFMMPLTAAFESLAQMFNSNNFNEQEAKRSLVGLVRDLRGIAFAFNAKSSFMMLFDWIYPAYMPILQRAIELWFHDPACTTPILKLMAELVHNRSQRLQFDVSSPNGILLFRETSKMITTYGNRILTLGELPKEQLYVLKLKGISICFSVLKAALSGNYVNFGVFRLYGDEALDNALQTFVKLLLSVPHSDLLDYPKLSQSYYSLLEVLTQDHMSFIASLEPHVIMYILSSISEGLTALDTMVCTGCCSCLDHIVTYLFKQLSRSGKKRGAPPPQESERFLHIMQQHPEMIQQMLSTVLNIIIFEDCRNQWSMSRPLLGLILLNEKYFSDLRSSIVSSQPPEKQQAMHLCFENLMEGIEGNLLTKNRDRFTQNLSAFRREVNDSMKNSSCGPNSNEMMS.

Residues 30 to 96 (AEKALVEFTN…RNYVLTYLAT (67 aa)) enclose the Importin N-terminal domain.

It belongs to the exportin family. As to expression, expressed in oocytes (at protein level).

It localises to the cytoplasm. It is found in the nucleus. Functionally, mediates the nuclear export of proteins (cargos) with broad substrate specificity. The protein is Exportin-7-A (xpo7-a) of Xenopus laevis (African clawed frog).